Reading from the N-terminus, the 419-residue chain is UDP-N-acetylglucosamine 1-carboxyvinyltransferase (419 aa).

Residue 22–23 (KN) participates in phosphoenolpyruvate binding. A UDP-N-acetyl-alpha-D-glucosamine-binding site is contributed by Arg-92. The active-site Proton donor is Cys-116. Residue Cys-116 is modified to 2-(S-cysteinyl)pyruvic acid O-phosphothioketal. Residues 121 to 125 (RPIDL), Asp-307, and Leu-329 contribute to the UDP-N-acetyl-alpha-D-glucosamine site.

It belongs to the EPSP synthase family. MurA subfamily.

Its subcellular location is the cytoplasm. It catalyses the reaction phosphoenolpyruvate + UDP-N-acetyl-alpha-D-glucosamine = UDP-N-acetyl-3-O-(1-carboxyvinyl)-alpha-D-glucosamine + phosphate. Its pathway is cell wall biogenesis; peptidoglycan biosynthesis. Cell wall formation. Adds enolpyruvyl to UDP-N-acetylglucosamine. The sequence is that of UDP-N-acetylglucosamine 1-carboxyvinyltransferase from Campylobacter fetus subsp. fetus (strain 82-40).